A 123-amino-acid chain; its full sequence is Small ribosomal subunit protein uS12 (123 aa).

Residues 1–29 (MPTINQLVRKGREPQKAKSKVPAMEQNPQ) are disordered. A 3-methylthioaspartic acid modification is found at Asp89.

Belongs to the universal ribosomal protein uS12 family. In terms of assembly, part of the 30S ribosomal subunit. Contacts proteins S8 and S17. May interact with IF1 in the 30S initiation complex.

Functionally, with S4 and S5 plays an important role in translational accuracy. Interacts with and stabilizes bases of the 16S rRNA that are involved in tRNA selection in the A site and with the mRNA backbone. Located at the interface of the 30S and 50S subunits, it traverses the body of the 30S subunit contacting proteins on the other side and probably holding the rRNA structure together. The combined cluster of proteins S8, S12 and S17 appears to hold together the shoulder and platform of the 30S subunit. This is Small ribosomal subunit protein uS12 from Novosphingobium aromaticivorans (strain ATCC 700278 / DSM 12444 / CCUG 56034 / CIP 105152 / NBRC 16084 / F199).